We begin with the raw amino-acid sequence, 355 residues long: Beta-ketoacyl-[acyl-carrier-protein] synthase III 1 (355 aa).

Residues Cys122 and His280 contribute to the active site. The ACP-binding stretch occupies residues 281 to 285; the sequence is QANER. Asn311 is a catalytic residue.

The protein belongs to the thiolase-like superfamily. FabH family. As to quaternary structure, homodimer.

Its subcellular location is the cytoplasm. The enzyme catalyses malonyl-[ACP] + acetyl-CoA + H(+) = 3-oxobutanoyl-[ACP] + CO2 + CoA. Its pathway is lipid metabolism; fatty acid biosynthesis. Catalyzes the condensation reaction of fatty acid synthesis by the addition to an acyl acceptor of two carbons from malonyl-ACP. Catalyzes the first condensation reaction which initiates fatty acid synthesis and may therefore play a role in governing the total rate of fatty acid production. Possesses both acetoacetyl-ACP synthase and acetyl transacylase activities. Its substrate specificity determines the biosynthesis of branched-chain and/or straight-chain of fatty acids. In Streptomyces avermitilis (strain ATCC 31267 / DSM 46492 / JCM 5070 / NBRC 14893 / NCIMB 12804 / NRRL 8165 / MA-4680), this protein is Beta-ketoacyl-[acyl-carrier-protein] synthase III 1.